The primary structure comprises 386 residues: MSELIQNVTTTFAQLFGYDATHLVQAPGRVNLIGEHTDYNDGFVLPCAINYQTVVAAAKREDFLVRLVAVDYDNDTDEFDLREEIAFQPKKMWSNYIRGVIKCLIERGFEFNGADIVVSGNVPQGAGLSSSAALEVVIGQTFKELYQLKISQAEIALNGQQAENQFVGCNCGIMDQMISAQGQANHAMLLDCRSLQTEAVAMPEQMAVVILNSNKKRGLVESEYNTRRQQCEAAAKTFGVKALRDVTLAQLTAKQAELDPVVAKRARHVITENERTLHAAQALREGNMPRLGELMAASHASMRDDFEITVKEIDTLVEIVQSVIGDQGGVRMTGGGFGGCVVALVHPKQVEAVQQAVAEHYEAATGLKASIYVCHATSGAGLVELA.

35–38 (EHTD) contacts substrate. Residue 125 to 131 (GAGLSSS) participates in ATP binding. Residues Ser-131 and Glu-163 each coordinate Mg(2+). Asp-175 serves as the catalytic Proton acceptor. Tyr-224 serves as a coordination point for substrate.

Belongs to the GHMP kinase family. GalK subfamily.

The protein resides in the cytoplasm. It carries out the reaction alpha-D-galactose + ATP = alpha-D-galactose 1-phosphate + ADP + H(+). Its pathway is carbohydrate metabolism; galactose metabolism. In terms of biological role, catalyzes the transfer of the gamma-phosphate of ATP to D-galactose to form alpha-D-galactose-1-phosphate (Gal-1-P). This chain is Galactokinase, found in Vibrio cholerae serotype O1 (strain ATCC 39315 / El Tor Inaba N16961).